The chain runs to 303 residues: Eukaryotic translation initiation factor 3 subunit G (303 aa).

The tract at residues Met-1–Asp-38 is disordered. One can recognise an RRM domain in the interval Ala-223–Lys-301.

The protein belongs to the eIF-3 subunit G family. In terms of assembly, component of the eukaryotic translation initiation factor 3 (eIF-3) complex.

Its subcellular location is the cytoplasm. Its function is as follows. RNA-binding component of the eukaryotic translation initiation factor 3 (eIF-3) complex, which is involved in protein synthesis of a specialized repertoire of mRNAs and, together with other initiation factors, stimulates binding of mRNA and methionyl-tRNAi to the 40S ribosome. The eIF-3 complex specifically targets and initiates translation of a subset of mRNAs involved in cell proliferation. This subunit can bind 18S rRNA. The polypeptide is Eukaryotic translation initiation factor 3 subunit G (Chaetomium globosum (strain ATCC 6205 / CBS 148.51 / DSM 1962 / NBRC 6347 / NRRL 1970) (Soil fungus)).